We begin with the raw amino-acid sequence, 148 residues long: 3-hydroxyacyl-[acyl-carrier-protein] dehydratase FabZ (148 aa).

Residue H48 is part of the active site.

Belongs to the thioester dehydratase family. FabZ subfamily.

It is found in the cytoplasm. It catalyses the reaction a (3R)-hydroxyacyl-[ACP] = a (2E)-enoyl-[ACP] + H2O. Involved in unsaturated fatty acids biosynthesis. Catalyzes the dehydration of short chain beta-hydroxyacyl-ACPs and long chain saturated and unsaturated beta-hydroxyacyl-ACPs. In Nitratiruptor sp. (strain SB155-2), this protein is 3-hydroxyacyl-[acyl-carrier-protein] dehydratase FabZ.